Reading from the N-terminus, the 220-residue chain is Fructose-6-phosphate aldolase (220 aa).

Lysine 85 (schiff-base intermediate with substrate) is an active-site residue.

It belongs to the transaldolase family. Type 3A subfamily. In terms of assembly, homodecamer.

It is found in the cytoplasm. It carries out the reaction beta-D-fructose 6-phosphate = dihydroxyacetone + D-glyceraldehyde 3-phosphate. Its function is as follows. Catalyzes the reversible formation of fructose 6-phosphate from dihydroxyacetone and D-glyceraldehyde 3-phosphate via an aldolization reaction. This Salmonella heidelberg (strain SL476) protein is Fructose-6-phosphate aldolase.